Reading from the N-terminus, the 515-residue chain is Sodium/hydrogen exchanger 9B1 (515 aa).

A compositionally biased stretch (basic and acidic residues) spans 1 to 10 (MHTTESKNEH). Positions 1–32 (MHTTESKNEHLEDENFQTSTTPQSLIDPNNTA) are disordered. The span at 16-32 (FQTSTTPQSLIDPNNTA) shows a compositional bias: polar residues. The next 13 membrane-spanning stretches (helical) occupy residues 66–86 (VIIT…SILG), 95–115 (LFGL…LQLI), 116–136 (RIPL…GFTI), 152–172 (WSSI…GLGL), 187–207 (LAVG…HFIM), 215–235 (FLLG…YMMV), 260–280 (ILAI…GGIL), 284–304 (IASI…GFFV), 337–357 (IGLH…AGTK), 368–388 (IITT…GAEV), 407–427 (LALC…GFSF), 431–451 (IFIA…GPLA), and 472–492 (VAFL…GILG).

The protein belongs to the monovalent cation:proton antiporter 1 (CPA1) transporter (TC 2.A.36) family. Expressed only in the testis.

It is found in the cell projection. The protein localises to the cilium. Its subcellular location is the flagellum membrane. Sperm-specific Na(+)/H(+) exchanger involved in intracellular pH regulation of spermatozoa. Involved in sperm motility and fertility. The sequence is that of Sodium/hydrogen exchanger 9B1 from Homo sapiens (Human).